The following is a 180-amino-acid chain: Insulin-like growth factor 2 (180 aa).

An N-terminal signal peptide occupies residues 1-24; sequence MGIPVGKSMLVLLISLAFALCCIA. The segment at 25–52 is b; sequence AYGPGETLCGGELVDTLQFVCSDRGFYF. Intrachain disulfides connect C33-C71, C45-C84, and C70-C75. The interval 53-64 is c; it reads SRPSSRANRRSR. An a region spans residues 65–85; sequence GIVEECCFRSCDLALLETYCA. Positions 86–91 are d; the sequence is TPAKSE. The propeptide at 92–180 is e peptide; the sequence is RDVSTSQAVL…ASSEMSSNHQ (89 aa). The segment at 157–180 is disordered; the sequence is PLIVLPPKDPAHGGASSEMSSNHQ.

Belongs to the insulin family. As to quaternary structure, interacts with MYORG; this interaction is required for IGF2 secretion. Interacts with integrins ITGAV:ITGB3 and ITGA6:ITGB4; integrin-binding is required for IGF2 signaling. Interacts with IGFBP2. Proteolytically processed by PCSK4, proIGF2 is cleaved at Arg-128 and Arg-92 to generate big-IGF2 and mature IGF2. As to expression, expressed in the heart, blood serum, kidney and skeletal muscle including the tibialis anterior muscle.

The protein localises to the secreted. Functionally, the insulin-like growth factors possess growth-promoting activity. Major fetal growth hormone in mammals. Plays a key role in regulating fetoplacental development. IGF2 is influenced by placental lactogen. Also involved in tissue differentiation. In adults, involved in glucose metabolism in adipose tissue, skeletal muscle and liver. Acts as a ligand for integrin which is required for IGF2 signaling. Positively regulates myogenic transcription factor MYOD1 function by facilitating the recruitment of transcriptional coactivators, thereby controlling muscle terminal differentiation. Inhibits myoblast differentiation and modulates metabolism via increasing the mitochondrial respiration rate. In terms of biological role, preptin undergoes glucose-mediated co-secretion with insulin, and acts as a physiological amplifier of glucose-mediated insulin secretion. Exhibits osteogenic properties by increasing osteoblast mitogenic activity through phosphoactivation of MAPK1 and MAPK3. The protein is Insulin-like growth factor 2 of Mus musculus (Mouse).